We begin with the raw amino-acid sequence, 493 residues long: Monocarboxylate transporter 1 (493 aa).

Residues 1–22 lie on the Cytoplasmic side of the membrane; that stretch reads MPPAIGGPVGYTPPDGGWGWAV. Residues 23-44 form a helical membrane-spanning segment; the sequence is LVGAFISIGFSYAFPKSITVFF. K38 provides a ligand contact to (S)-lactate. Topologically, residues 45–55 are extracellular; the sequence is KEIEVIFSATT. The helical transmembrane segment at 56 to 80 threads the bilayer; it reads SEVSWISSIMLAVMYAGGPISSILV. Over 81 to 84 the chain is Cytoplasmic; the sequence is NKYG. The helical transmembrane segment at 85–105 threads the bilayer; sequence SRPVMIAGGCLSGCGLIAASF. Over 106–109 the chain is Extracellular; the sequence is CNTV. The chain crosses the membrane as a helical span at residues 110–132; sequence QELYLCIGVIGGLGLAFNLNPAL. Topologically, residues 133–146 are cytoplasmic; that stretch reads TMIGKYFYKKRPLA. The chain crosses the membrane as a helical span at residues 147–169; it reads NGLAMAGSPVFLSTLAPLNQAFF. Residues 170-174 lie on the Extracellular side of the membrane; sequence DIFDW. The chain crosses the membrane as a helical span at residues 175–194; it reads RGSFLILGGLLLNCCVAGSL. Residues 195 to 254 are Cytoplasmic-facing; that stretch reads MRPIGPEQVKLEKLKSKESLQEAGKSDANTDLIGGSPKGEKLSVFQTINKFLDLSLFTHR. S210, S213, and S220 each carry phosphoserine. Residue T224 is modified to Phosphothreonine. At S230 the chain carries Phosphoserine. The helical transmembrane segment at 255 to 281 threads the bilayer; the sequence is GFLLYLSGNVVMFFGLFTPLVFLSSYG. Residues 282–288 are Extracellular-facing; that stretch reads KSKDFSS. A helical membrane pass occupies residues 289–310; sequence EKSAFLLSILAFVDMVARPSMG. D302 contacts H(+). Residue R306 participates in (S)-lactate binding. Over 311 to 321 the chain is Cytoplasmic; that stretch reads LAANTKWIRPR. A helical transmembrane segment spans residues 322–342; it reads IQYFFAASVVANGVCHLLAPL. The Extracellular portion of the chain corresponds to 343–346; that stretch reads STTY. Residues 347-368 form a helical membrane-spanning segment; sequence VGFCVYAGVFGFAFGWLSSVLF. The Cytoplasmic segment spans residues 369 to 382; the sequence is ETLMDLIGPQRFSS. Residues 383 to 403 traverse the membrane as a helical segment; the sequence is AVGLVTIVECCPVLLGPPLLG. Residues 404 to 414 lie on the Extracellular side of the membrane; the sequence is RLNDMYGDYKY. The chain crosses the membrane as a helical span at residues 415-436; the sequence is TYWACGVILIIAGIYLFIGMGI. Topologically, residues 437–493 are cytoplasmic; sequence NYRLLAKEQKAEEKQKREGKEDEASTDVDEKPKETMKAAQSPQQHSSGDPTEEESPV. Residues 447–472 show a composition bias toward basic and acidic residues; it reads AEEKQKREGKEDEASTDVDEKPKETM. Residues 447–493 form a disordered region; that stretch reads AEEKQKREGKEDEASTDVDEKPKETMKAAQSPQQHSSGDPTEEESPV. S461 carries the post-translational modification Phosphoserine. The residue at position 462 (T462) is a Phosphothreonine. Over residues 474–485 the composition is skewed to polar residues; that stretch reads AAQSPQQHSSGD. Phosphoserine is present on residues S477, S482, S483, and S491.

It belongs to the major facilitator superfamily. Monocarboxylate porter (TC 2.A.1.13) family. In terms of assembly, interacts with isoform 2 of BSG; interaction mediates SLC16A1 targeting to the plasma membrane. Interacts with EMB; interaction mediates SLC16A1 targeting to the plasma membrane. As to expression, detected in liver, brain, spinal cord, spermatozoa, muscle, white adipose tissue and brown adipose tissue (at protein level). Widely expressed, except in pancreas, where expression is not detectable.

The protein localises to the cell membrane. The protein resides in the basolateral cell membrane. It localises to the apical cell membrane. The catalysed reaction is (S)-lactate(in) + H(+)(in) = (S)-lactate(out) + H(+)(out). The enzyme catalyses acetate(out) + H(+)(out) = acetate(in) + H(+)(in). It catalyses the reaction acetoacetate(out) + H(+)(out) = acetoacetate(in) + H(+)(in). It carries out the reaction pyruvate(out) + H(+)(out) = pyruvate(in) + H(+)(in). The catalysed reaction is (R)-3-hydroxybutanoate(out) + H(+)(out) = (R)-3-hydroxybutanoate(in) + H(+)(in). The enzyme catalyses 3-methyl-2-oxobutanoate(out) + H(+)(out) = 3-methyl-2-oxobutanoate(in) + H(+)(in). It catalyses the reaction 4-methyl-2-oxopentanoate(out) + H(+)(out) = 4-methyl-2-oxopentanoate(in) + H(+)(in). It carries out the reaction succinate(in) + 2 H(+)(in) = succinate(out) + 2 H(+)(out). Bidirectional proton-coupled monocarboxylate transporter. Catalyzes the rapid transport across the plasma membrane of many monocarboxylates such as lactate, pyruvate, acetate and the ketone bodies acetoacetate and beta-hydroxybutyrate, and thus contributes to the maintenance of intracellular pH. The transport direction is determined by the proton motive force and the concentration gradient of the substrate monocarboxylate. MCT1 is a major lactate exporter. Plays a role in cellular responses to a high-fat diet by modulating the cellular levels of lactate and pyruvate that contribute to the regulation of central metabolic pathways and insulin secretion, with concomitant effects on plasma insulin levels and blood glucose homeostasis. Facilitates the protonated monocarboxylate form of succinate export, that its transient protonation upon muscle cell acidification in exercising muscle and ischemic heart. Functions via alternate outward- and inward-open conformation states. Protonation and deprotonation of 302-Asp is essential for the conformational transition. The chain is Monocarboxylate transporter 1 (Slc16a1) from Mus musculus (Mouse).